We begin with the raw amino-acid sequence, 51 residues long: Large ribosomal subunit protein bL33 (51 aa).

The disordered stretch occupies residues 1–21 (MRDKIKLESSAGTGHFYTTTK). Residues 10 to 20 (SAGTGHFYTTT) are compositionally biased toward polar residues.

The protein belongs to the bacterial ribosomal protein bL33 family.

The sequence is that of Large ribosomal subunit protein bL33 (rpmG) from Neisseria meningitidis serogroup A / serotype 4A (strain DSM 15465 / Z2491).